A 778-amino-acid polypeptide reads, in one-letter code: WGCLRLPLPLCHALAAHCRCPASHTLRCREPLTVSSLSALLLGAHRPTDVIIENQALLTSLTRDDTRMLWDLRHLTISNSGLQYISDDAFQDNHRLSHVNLSFNALTSLSWKTFQHLPLQELTLEGNPFNCSCGIRWLQLWQNGSRAELGNQSLLCWEGSMLVALDSHPLHDCEPPTARIEHPDVVLRQGDSVNLTCHIWGEPSATGEWVLPHVGSEPSVTKLSEWELVLEINNISSSLNHKDLTCRAENSVGLAEDSVMLNVTFPPVILLLSEAIPQHFWCIPFSVDSNPTPRILWLFNGSMLPEGPYIHTRIVEYEPNSTVLHGCLQLNRPTHVNNGNYTLVVQNPLGRAARSIQGRFMDNPFSFSPEEPIPVSISPLGTRNSSLEGPVETADEHTFGVSVAVALAVFASLFLSVMLIALNKCGHRSKFGINRSAVLAPEDGLAMSLHFMTLGSSPVSSTESKLDGLKSNFIENPQYFCNACVHHVQRRDIVLKWELGEGAFGKVFLAECSHLLPEQEKTLVAVKALKEVTENARLDFQREAELLTVLQHEHIVKFYGVCTEGDPLIMVFEYMKHGDLNRFLRSHGPDAKILDQGQGQPCGQLTLSHMLQIATQIASGMVYLASLHFVHRDLATRNCLVGHDLVVKIGDFGMSRDIYSTDYYRVGGRTMLPIRWMPPESILYRKFTTESDIWSFGVVLWEIFTYGKQPWYQLSNTEAIECITQGRELERPRTCPSEVYDIMQSCWQREPQQRSIQDIHSRLQALVKTPPIYLDILG.

An N-terminal signal peptide occupies residues Trp1–Leu14. The Extracellular segment spans residues Ala15–Gly400. Cys18 and Cys20 are oxidised to a cystine. 2 LRR repeats span residues Asp71–Asp92 and Arg95–His116. N-linked (GlcNAc...) asparagine glycosylation is found at Asn100, Asn130, Asn143, Asn151, Asn194, Asn234, Asn262, Asn300, Asn320, Asn340, and Asn384. The 49-residue stretch at Asn127–Pro175 folds into the LRRCT domain. A disulfide bridge links Cys133 with Cys173. 2 Ig-like C2-type domains span residues Pro175–Asn262 and Trp281–Asn347. Cys282 and Cys327 form a disulfide bridge. Residues Val401–Ala421 traverse the membrane as a helical segment. Topologically, residues Leu422–Gly778 are cytoplasmic. Tyr479 carries the post-translational modification Phosphotyrosine; by autocatalysis. Residues Ile493 to Leu763 enclose the Protein kinase domain. ATP is bound by residues Leu499–Val507 and Lys527. The Proton acceptor role is filled by Asp633. Residues Tyr659, Tyr663, Tyr664, and Tyr773 each carry the phosphotyrosine; by autocatalysis modification.

This sequence belongs to the protein kinase superfamily. Tyr protein kinase family. Insulin receptor subfamily. In terms of assembly, exists in a dynamic equilibrium between monomeric (low affinity) and dimeric (high affinity) structures. Homodimerization is induced by NGF dimer binding. Interacts with PTPRS. Ligand-mediated auto-phosphorylation. In terms of processing, ubiquitinated. Undergoes polyubiquitination upon activation; regulated by NGFR. Ubiquitination regulates the internalization of the receptor.

The protein localises to the cell membrane. Its subcellular location is the early endosome membrane. It is found in the late endosome membrane. It localises to the recycling endosome membrane. It carries out the reaction L-tyrosyl-[protein] + ATP = O-phospho-L-tyrosyl-[protein] + ADP + H(+). The pro-survival signaling effect of NTRK1 in neurons requires its endocytosis into signaling early endosomes and its retrograde axonal transport. In terms of biological role, receptor tyrosine kinase involved in the development and the maturation of the central and peripheral nervous systems through regulation of proliferation, differentiation and survival of sympathetic and nervous neurons. High affinity receptor for NGF which is its primary ligand, it can also bind and be activated by NTF3/neurotrophin-3. Upon dimeric NGF ligand-binding, undergoes homodimerization, autophosphorylation and activation. Recruits, phosphorylates and/or activates several downstream effectors that regulate distinct overlapping signaling cascades driving cell survival and differentiation. In absence of ligand and activation, may promote cell death, making the survival of neurons dependent on trophic factors. This Gallus gallus (Chicken) protein is High affinity nerve growth factor receptor (NTRK1).